Consider the following 292-residue polypeptide: Lipoyl synthase (292 aa).

[4Fe-4S] cluster-binding residues include cysteine 34, cysteine 39, cysteine 45, cysteine 60, cysteine 64, cysteine 67, and serine 273. The region spanning 46-262 (WNKKHATVMI…KYVAYSKGFL (217 aa)) is the Radical SAM core domain.

It belongs to the radical SAM superfamily. Lipoyl synthase family. It depends on [4Fe-4S] cluster as a cofactor.

It is found in the cytoplasm. It carries out the reaction [[Fe-S] cluster scaffold protein carrying a second [4Fe-4S](2+) cluster] + N(6)-octanoyl-L-lysyl-[protein] + 2 oxidized [2Fe-2S]-[ferredoxin] + 2 S-adenosyl-L-methionine + 4 H(+) = [[Fe-S] cluster scaffold protein] + N(6)-[(R)-dihydrolipoyl]-L-lysyl-[protein] + 4 Fe(3+) + 2 hydrogen sulfide + 2 5'-deoxyadenosine + 2 L-methionine + 2 reduced [2Fe-2S]-[ferredoxin]. The protein operates within protein modification; protein lipoylation via endogenous pathway; protein N(6)-(lipoyl)lysine from octanoyl-[acyl-carrier-protein]: step 2/2. Catalyzes the radical-mediated insertion of two sulfur atoms into the C-6 and C-8 positions of the octanoyl moiety bound to the lipoyl domains of lipoate-dependent enzymes, thereby converting the octanoylated domains into lipoylated derivatives. The polypeptide is Lipoyl synthase (Ehrlichia ruminantium (strain Welgevonden)).